We begin with the raw amino-acid sequence, 508 residues long: Photosystem II CP47 reaction center protein (508 aa).

A run of 6 helical transmembrane segments spans residues 21–36, 101–115, 140–156, 203–218, 237–252, and 457–472; these read AVHI…WAGS, IVFS…TWHW, GIHL…FGAF, VAAG…FHLS, VLSS…AFIV, and TFAL…HGAR.

This sequence belongs to the PsbB/PsbC family. PsbB subfamily. As to quaternary structure, PSII is composed of 1 copy each of membrane proteins PsbA, PsbB, PsbC, PsbD, PsbE, PsbF, PsbH, PsbI, PsbJ, PsbK, PsbL, PsbM, PsbT, PsbX, PsbY, PsbZ, Psb30/Ycf12, at least 3 peripheral proteins of the oxygen-evolving complex and a large number of cofactors. It forms dimeric complexes. It depends on Binds multiple chlorophylls. PSII binds additional chlorophylls, carotenoids and specific lipids. as a cofactor.

It is found in the plastid. It localises to the chloroplast thylakoid membrane. One of the components of the core complex of photosystem II (PSII). It binds chlorophyll and helps catalyze the primary light-induced photochemical processes of PSII. PSII is a light-driven water:plastoquinone oxidoreductase, using light energy to abstract electrons from H(2)O, generating O(2) and a proton gradient subsequently used for ATP formation. This is Photosystem II CP47 reaction center protein from Welwitschia mirabilis (Tree tumbo).